A 298-amino-acid chain; its full sequence is tRNA dimethylallyltransferase 2 (298 aa).

Position 10-17 (10-17 (GPTASGKT)) interacts with ATP. 12-17 (TASGKT) contributes to the substrate binding site. Residues 35 to 38 (DSRQ) are interaction with substrate tRNA.

It belongs to the IPP transferase family. Monomer. Requires Mg(2+) as cofactor.

The enzyme catalyses adenosine(37) in tRNA + dimethylallyl diphosphate = N(6)-dimethylallyladenosine(37) in tRNA + diphosphate. Catalyzes the transfer of a dimethylallyl group onto the adenine at position 37 in tRNAs that read codons beginning with uridine, leading to the formation of N6-(dimethylallyl)adenosine (i(6)A). This chain is tRNA dimethylallyltransferase 2, found in Syntrophotalea carbinolica (strain DSM 2380 / NBRC 103641 / GraBd1) (Pelobacter carbinolicus).